A 236-amino-acid chain; its full sequence is Protein INCA1 (236 aa).

Position 23 is a phosphoserine (serine 23). Residues 75-99 are interaction with CCNA1 and CCNA1/CDK2 complex; essential for CDK2 inhibitory activity; it reads GLYPPEQLPPPEMLWRRKKRRPCLE. Residues 90-95 carry the Nuclear localization signal motif; sequence RRKKRR. Threonine 182 carries the post-translational modification Phosphothreonine. A phosphoserine mark is found at serine 191 and serine 194.

Belongs to the INCA family. In terms of assembly, interacts with CCNA1. Interacts with CCNA2, CCNB1 and CCNE1. Found in a complex with CCNA1 and CDK2. Interacts with ZNF16; the interaction inhibits INCA1 activity and induces the cell cycle process. Interacts with SPACA9. Interacts with the CCNA1/CDK2 complex. Interacts with ING5, DAZAP2, RNF26, USP15, SPOUT1, DPH7, TRIM26 and RAB5C. Post-translationally, phosphorylated when part of a complex with CCNA1 and CDK2. Strongly phosphorylated by CDK2 on its C-terminal region spanning amino acid 149-221. Less intensively phosphorylated by CDK2 on its first 75 amino acid residues. Detected in testis, and at lower levels in ovary. Detected at very low levels in testis tumors. Down-regulated in bone marrow cells in acute myeloid and lymphoid leukemia patients as compared with normal bone marrow cells.

The protein localises to the nucleus. The protein resides in the cytoplasm. In terms of biological role, binds to CDK2-bound cyclins and inhibits the kinase activity of CDK2; binding to cyclins is critical for its function as CDK inhibitor. Inhibits cell growth and cell proliferation and may play a role in cell cycle control. Required for ING5-mediated regulation of S-phase progression, enhancement of Fas-induced apoptosis and inhibition of cell growth. In Homo sapiens (Human), this protein is Protein INCA1 (INCA1).